A 216-amino-acid polypeptide reads, in one-letter code: Somatotropin (216 aa).

The first 26 residues, 1–26 (MATDSRTSWLLTVSLLCLLWPQEASA), serve as a signal peptide directing secretion. A Zn(2+)-binding site is contributed by H45. Residues C78 and C189 are joined by a disulfide bond. The residue at position 131 (S131) is a Phosphoserine. E198 contributes to the Zn(2+) binding site. C206 and C214 form a disulfide bridge.

It belongs to the somatotropin/prolactin family.

The protein resides in the secreted. In terms of biological role, plays an important role in growth control. Its major role in stimulating body growth is to stimulate the liver and other tissues to secrete IGF1. It stimulates both the differentiation and proliferation of myoblasts. It also stimulates amino acid uptake and protein synthesis in muscle and other tissues. The chain is Somatotropin (Gh1) from Mus musculus (Mouse).